The primary structure comprises 127 residues: Ribosome-binding factor A (127 aa).

This sequence belongs to the RbfA family. Monomer. Binds 30S ribosomal subunits, but not 50S ribosomal subunits or 70S ribosomes.

It localises to the cytoplasm. Functionally, one of several proteins that assist in the late maturation steps of the functional core of the 30S ribosomal subunit. Associates with free 30S ribosomal subunits (but not with 30S subunits that are part of 70S ribosomes or polysomes). Required for efficient processing of 16S rRNA. May interact with the 5'-terminal helix region of 16S rRNA. In Actinobacillus pleuropneumoniae serotype 7 (strain AP76), this protein is Ribosome-binding factor A.